Reading from the N-terminus, the 575-residue chain is Carboxylesterase 5A (575 aa).

The signal sequence occupies residues 1 to 28; sequence MSGDWVRPGQALIWVIWIFGAIIEGSVT. C94 and C121 are joined by a disulfide. N134 carries N-linked (GlcNAc...) asparagine glycosylation. The active-site Acyl-ester intermediate is the S226. A disulfide bond links C280 and C291. The N-linked (GlcNAc...) asparagine glycan is linked to N281. E345 serves as the catalytic Charge relay system. A glycan (N-linked (GlcNAc...) asparagine) is linked at N363. H454 acts as the Charge relay system in catalysis. A glycan (N-linked (GlcNAc...) asparagine) is linked at N524.

This sequence belongs to the type-B carboxylesterase/lipase family. Post-translationally, N-glycosylated.

The protein resides in the secreted. The enzyme catalyses a carboxylic ester + H2O = an alcohol + a carboxylate + H(+). In terms of biological role, involved in the detoxification of xenobiotics and in the activation of ester and amide prodrugs. This Mus musculus (Mouse) protein is Carboxylesterase 5A (Ces5a).